We begin with the raw amino-acid sequence, 314 residues long: MKLLEIKIESSYDVEDALAYFATEDLKALGTEARRRSDFEQAGWLHDSTVVDMDDIPNLPDELEFIAYFDEETDPEEMVKCFKDKLAELAGYGLKTAPGEISVDYVADQDWNTVWKKYYHVINLSRHLAIVPEWEDYQPVFKDQEIIRLDPGLAFGTGNHQTTQLAMLGIERAMVKPLTVADVGTGSGILAIAAHKLGAKSVLATDISDESMTAAEENAALNGIYDIALQKTSLLADVDGKFDLIVANILAEILLDLIPQLDSHLNEDGQVIFSGIDYLQLPKIEQALAENSFQIDLKMRAGRWIGLAISRKHD.

4 residues coordinate S-adenosyl-L-methionine: threonine 163, glycine 184, aspartate 206, and asparagine 248.

Belongs to the methyltransferase superfamily. PrmA family.

It localises to the cytoplasm. The catalysed reaction is L-lysyl-[protein] + 3 S-adenosyl-L-methionine = N(6),N(6),N(6)-trimethyl-L-lysyl-[protein] + 3 S-adenosyl-L-homocysteine + 3 H(+). In terms of biological role, methylates ribosomal protein L11. The chain is Ribosomal protein L11 methyltransferase from Lactobacillus delbrueckii subsp. bulgaricus (strain ATCC BAA-365 / Lb-18).